Consider the following 319-residue polypeptide: Cytochrome c biogenesis protein CcsA (319 aa).

7 helical membrane-spanning segments follow: residues 17-37, 44-64, 68-88, 143-163, 223-243, 257-271, and 286-306; these read TISIVITIHLITLLVHELGGL, GMIVTFFSITGFLVSRWASSG, LSNLYESLIFLSWALYILHTI, MLLSYATLLCGSLLSAAILII, VISLGFTLLTIGILCGAVWAN, TWAFITWTIFAIYLH, and VASIGFLIIWICYFGINLLGI.

The protein belongs to the CcmF/CycK/Ccl1/NrfE/CcsA family. In terms of assembly, may interact with Ccs1.

It localises to the plastid. The protein resides in the chloroplast thylakoid membrane. Its function is as follows. Required during biogenesis of c-type cytochromes (cytochrome c6 and cytochrome f) at the step of heme attachment. The polypeptide is Cytochrome c biogenesis protein CcsA (Lolium perenne (Perennial ryegrass)).